We begin with the raw amino-acid sequence, 417 residues long: NADH-quinone oxidoreductase subunit D (417 aa).

Belongs to the complex I 49 kDa subunit family. In terms of assembly, NDH-1 is composed of 14 different subunits. Subunits NuoB, C, D, E, F, and G constitute the peripheral sector of the complex.

The protein resides in the cell inner membrane. The catalysed reaction is a quinone + NADH + 5 H(+)(in) = a quinol + NAD(+) + 4 H(+)(out). Functionally, NDH-1 shuttles electrons from NADH, via FMN and iron-sulfur (Fe-S) centers, to quinones in the respiratory chain. The immediate electron acceptor for the enzyme in this species is believed to be ubiquinone. Couples the redox reaction to proton translocation (for every two electrons transferred, four hydrogen ions are translocated across the cytoplasmic membrane), and thus conserves the redox energy in a proton gradient. The chain is NADH-quinone oxidoreductase subunit D from Azoarcus sp. (strain BH72).